A 210-amino-acid chain; its full sequence is 3 beta-hydroxysteroid dehydrogenase/Delta 5--&gt;4-isomerase (210 aa).

Tyrosine 29 functions as the Proton acceptor in the catalytic mechanism. Lysine 33 serves as a coordination point for NAD(+).

Belongs to the 3-beta-HSD family.

It catalyses the reaction a 3beta-hydroxy-Delta(5)-steroid + NAD(+) = a 3-oxo-Delta(5)-steroid + NADH + H(+). The catalysed reaction is a 3-oxo-Delta(5)-steroid = a 3-oxo-Delta(4)-steroid. It participates in lipid metabolism; steroid biosynthesis. In terms of biological role, catalyzes the oxidative conversion of Delta(5)-ene-3-beta-hydroxy steroid, and the oxidative conversion of ketosteroids. The 3-beta-HSD enzymatic system plays a crucial role in the biosynthesis of all classes of hormonal steroids. During viral infection, steroid production contributes to virulence by inhibiting the host inflammatory response. The protein is 3 beta-hydroxysteroid dehydrogenase/Delta 5--&gt;4-isomerase (OPG174) of Variola virus (isolate Human/India/Ind3/1967) (VARV).